Consider the following 284-residue polypeptide: 2-dehydro-3-deoxyphosphooctonate aldolase (284 aa).

Belongs to the KdsA family.

It localises to the cytoplasm. The enzyme catalyses D-arabinose 5-phosphate + phosphoenolpyruvate + H2O = 3-deoxy-alpha-D-manno-2-octulosonate-8-phosphate + phosphate. The protein operates within carbohydrate biosynthesis; 3-deoxy-D-manno-octulosonate biosynthesis; 3-deoxy-D-manno-octulosonate from D-ribulose 5-phosphate: step 2/3. It functions in the pathway bacterial outer membrane biogenesis; lipopolysaccharide biosynthesis. The protein is 2-dehydro-3-deoxyphosphooctonate aldolase of Salmonella arizonae (strain ATCC BAA-731 / CDC346-86 / RSK2980).